We begin with the raw amino-acid sequence, 322 residues long: tRNA-dihydrouridine(16) synthase (322 aa).

Residues 8–10 and Gln69 each bind FMN; that span reads PME. The Proton donor role is filled by Cys99. FMN is bound by residues Lys140, 200-202, and 224-225; these read NGD and GR.

Belongs to the Dus family. DusC subfamily. FMN serves as cofactor.

It carries out the reaction 5,6-dihydrouridine(16) in tRNA + NADP(+) = uridine(16) in tRNA + NADPH + H(+). The catalysed reaction is 5,6-dihydrouridine(16) in tRNA + NAD(+) = uridine(16) in tRNA + NADH + H(+). In terms of biological role, catalyzes the synthesis of 5,6-dihydrouridine (D), a modified base found in the D-loop of most tRNAs, via the reduction of the C5-C6 double bond in target uridines. Specifically modifies U16 in tRNAs. In Cupriavidus necator (strain ATCC 17699 / DSM 428 / KCTC 22496 / NCIMB 10442 / H16 / Stanier 337) (Ralstonia eutropha), this protein is tRNA-dihydrouridine(16) synthase.